The primary structure comprises 269 residues: MPELPEVETSRRGISPYLVGHTILYAEVRNARLRWPVSAEILSLSDEPVLSVRRRAKYLLIELTHGWIIVHLGMSGSLRILPEYSEPEKHDHVDLVMDSGKVLRYTDPRRFGAWLWTDSLETSSVLAHLGPEPLEAEFFADYLYQASRGKKTAIKQWIMDNKVVVGVGNIYASESLFAAGIHPDRAAGSLNENDADVLVRVIKQVLQLSIEQGGTTLRDFLQSDGKPGYFAQELRVYGRNGEPCRTCGTPIETAKHGQRSTFFCRRCQV.

Proline 2 acts as the Schiff-base intermediate with DNA in catalysis. Glutamate 3 acts as the Proton donor in catalysis. Lysine 57 functions as the Proton donor; for beta-elimination activity in the catalytic mechanism. Residues histidine 90, arginine 109, and lysine 150 each contribute to the DNA site. The segment at 235–269 adopts an FPG-type zinc-finger fold; it reads RVYGRNGEPCRTCGTPIETAKHGQRSTFFCRRCQV. Catalysis depends on arginine 259, which acts as the Proton donor; for delta-elimination activity.

The protein belongs to the FPG family. As to quaternary structure, monomer. Zn(2+) serves as cofactor.

It catalyses the reaction Hydrolysis of DNA containing ring-opened 7-methylguanine residues, releasing 2,6-diamino-4-hydroxy-5-(N-methyl)formamidopyrimidine.. The catalysed reaction is 2'-deoxyribonucleotide-(2'-deoxyribose 5'-phosphate)-2'-deoxyribonucleotide-DNA = a 3'-end 2'-deoxyribonucleotide-(2,3-dehydro-2,3-deoxyribose 5'-phosphate)-DNA + a 5'-end 5'-phospho-2'-deoxyribonucleoside-DNA + H(+). Functionally, involved in base excision repair of DNA damaged by oxidation or by mutagenic agents. Acts as a DNA glycosylase that recognizes and removes damaged bases. Has a preference for oxidized purines, such as 7,8-dihydro-8-oxoguanine (8-oxoG). Has AP (apurinic/apyrimidinic) lyase activity and introduces nicks in the DNA strand. Cleaves the DNA backbone by beta-delta elimination to generate a single-strand break at the site of the removed base with both 3'- and 5'-phosphates. The protein is Formamidopyrimidine-DNA glycosylase of Pectobacterium atrosepticum (strain SCRI 1043 / ATCC BAA-672) (Erwinia carotovora subsp. atroseptica).